Reading from the N-terminus, the 67-residue chain is Large ribosomal subunit protein uL29 (67 aa).

It belongs to the universal ribosomal protein uL29 family.

The protein is Large ribosomal subunit protein uL29 of Sulfurihydrogenibium sp. (strain YO3AOP1).